Consider the following 599-residue polypeptide: Thiamine transporter THI72 (599 aa).

11 helical membrane-spanning segments follow: residues 42 to 62, 78 to 98, 112 to 132, 174 to 194, 197 to 217, 280 to 300, 333 to 353, 372 to 392, 395 to 415, 447 to 467, and 484 to 504; these read WGFW…GMWI, IGAF…NSCP, FVFG…MSIV, LIGF…KPYH, YILI…VIYL, IVAL…GASA, FFCG…NCGF, GAIF…YNSS, FLTV…VMIC, AIVA…WEVN, and SFFS…LFPF. The tract at residues 553-599 is disordered; the sequence is HEYKPESSDDELPELTKTSSENTKVFEIVHQKDNEKESSTSSEKQIA. Phosphoserine is present on residues serine 560 and serine 572. Positions 579-590 are enriched in basic and acidic residues; sequence EIVHQKDNEKES.

This sequence belongs to the purine-cytosine permease (2.A.39) family.

The protein resides in the membrane. Functionally, low affinity thiamine transporter responsible for intake of thiamine. It is possible that the primary function is the uptake of closely related compounds and that thiamine transport is a secondary activity of these proteins. The protein is Thiamine transporter THI72 (THI72) of Saccharomyces cerevisiae (strain ATCC 204508 / S288c) (Baker's yeast).